Consider the following 1616-residue polypeptide: Protein Shroom2 (1616 aa).

Residues 26–108 (LVEVQLSGGA…TLKLVVKRRS (83 aa)) enclose the PDZ domain. 2 disordered regions span residues 128-159 (ELAASPFTSTSGCPSWSGRHHASSSSHDLSSS) and 183-229 (HPSS…KADT). Low complexity predominate over residues 150-159 (SSSSHDLSSS). Polar residues-rich tracts occupy residues 186–197 (SRLSVAKSNSSI) and 220–229 (PDHTLSKADT). Ser231 carries the post-translational modification Phosphoserine. Residues 247 to 259 (QGGRQAQAAGDPQ) are compositionally biased toward low complexity. Disordered regions lie at residues 247–475 (QGGR…SGWQ), 502–678 (GALE…PLAG), 695–790 (TSFK…SEDT), 802–869 (EETS…LPRR), 881–1100 (KEQR…PSPA), 1115–1184 (PSVF…LTDK), 1268–1302 (AEPEAPHRAQPAEPQPLGTQVPPEKDRCTSPPGLS), and 1363–1389 (QRRKLLPKIPSPRSTEERKEEPSVPAA). Residues 312–321 (SSPPPPPPPL) show a composition bias toward pro residues. Phosphoserine occurs at positions 313 and 325. A compositionally biased stretch (low complexity) spans 343–356 (AAAAQHFTALAQAQ). Over residues 358–370 (RGDRRPELTDRPW) the composition is skewed to basic and acidic residues. The segment covering 405–415 (SSRLQASLSSS) has biased composition (low complexity). A Phosphoserine modification is found at Ser413. The region spanning 684-773 (LKEAQARVLR…SEPEKMNEVG (90 aa)) is the ASD1 domain. 2 stretches are compositionally biased toward basic and acidic residues: residues 754-770 (FTAEQKLKSYSEPEKMN) and 821-830 (IPRDKPERPR). Positions 842–854 (WSRTTSLGDSLNA) are enriched in polar residues. Residues Ser851, Ser897, Ser921, Ser922, and Ser924 each carry the phosphoserine modification. Thr925 is subject to Phosphothreonine. A compositionally biased stretch (basic and acidic residues) spans 926-958 (DHYKQEASVELRRQAGDPGEPREELPSAVRAEE). Ser974 is modified (phosphoserine). Positions 975–994 (PGSQQHPPSQKAPNPPTFSE) are enriched in polar residues. Phosphoserine is present on residues Ser1036 and Ser1039. The segment covering 1068–1077 (PKREPRRYRA) has biased composition (basic and acidic residues). Over residues 1159 to 1176 (LRLQTATMETSRSPSPQF) the composition is skewed to polar residues. Phosphoserine is present on residues Ser1171, Ser1173, and Ser1297. Residues 1317 to 1611 (EELAREIVGK…QLKCLLDSLQ (295 aa)) form the ASD2 domain.

It belongs to the shroom family. As to quaternary structure, interacts with F-actin. Abundant in retina and melanoma; also in brain, placenta, lung, kidney and pancreas.

The protein localises to the apical cell membrane. The protein resides in the cell junction. It localises to the tight junction. Its subcellular location is the cytoplasm. It is found in the cytoskeleton. Its function is as follows. May be involved in endothelial cell morphology changes during cell spreading. In the retinal pigment epithelium, may regulate the biogenesis of melanosomes and promote their association with the apical cell surface by inducing gamma-tubulin redistribution. This Homo sapiens (Human) protein is Protein Shroom2 (SHROOM2).